The sequence spans 115 residues: U3-lycotoxin-Ls1a (115 aa).

Positions 1 to 20 (MKFVLLFGVLLVTLFSYSSA) are cleaved as a signal peptide. A propeptide spanning residues 21-44 (EMLDDFDQADEEELLSLIEKEEAR) is cleaved from the precursor. 4 cysteine pairs are disulfide-bonded: Cys-48/Cys-63, Cys-55/Cys-72, Cys-62/Cys-87, and Cys-74/Cys-85.

It belongs to the neurotoxin 19 (CSTX) family. 01 subfamily. In terms of tissue distribution, expressed by the venom gland.

The protein resides in the secreted. The sequence is that of U3-lycotoxin-Ls1a from Lycosa singoriensis (Wolf spider).